The chain runs to 166 residues: Large ribosomal subunit protein uL10 (166 aa).

It belongs to the universal ribosomal protein uL10 family. As to quaternary structure, part of the ribosomal stalk of the 50S ribosomal subunit. The N-terminus interacts with L11 and the large rRNA to form the base of the stalk. The C-terminus forms an elongated spine to which L12 dimers bind in a sequential fashion forming a multimeric L10(L12)X complex.

In terms of biological role, forms part of the ribosomal stalk, playing a central role in the interaction of the ribosome with GTP-bound translation factors. In Neisseria gonorrhoeae (strain ATCC 700825 / FA 1090), this protein is Large ribosomal subunit protein uL10.